The primary structure comprises 1668 residues: MNVGQAAHLSGQMSGQAPQTNQVGGSGVGGADGLPQQMQDVVGLGGLDTQFLLMRNTMRDRIFEYIGRKQSSTDWRRRLPELAKRLEEILYRKFLNKADYLNMMRGPVEPQLQFAIKTLSAQNQQNQQNQQMPRQMASSSGYGTMIPTPGITQSATGNSRMPYVTDNTGLPSSGATMVPQGANTGSMSNGYQHLTTSVPLNSTTSSIPSTMGPVGIQRQVTHMIPTPGFNNQQNVPVNPDFSNGAGYFNGEPTVTSQMQQQKQFPSNQNSHQIQHIGGHSNSGMHSNMLENSSAYGLSDGHVNGGMGVHGSNMQLTNRSAASEAYINISTYGNSPKPVQQQFNQHPPQRIPTPVDISGSGNFYNTGSSALTAANNHSMGATNLPSRSRMNSMLHTNQLNMQSIQPQPQIKTEVLDQPEKMNFQSSQLTHEQLIRQQHSMQQHQMQPSSQFVQNQYHLNQQQPNSQHQQSILRSNSLKQPQLSSSHSMQLSEQGALPHTELISSQATEHADIPIYQGQYQQRSAHDNVKGGQVFGHLSSSQNFHSNASHDSQQLLPTNQQLDDSSNDVSYVLKGSQPEQMHQAQWRPQTMEKAPVTNDSSLEKQIQADLCQRTMSQDGAQQPFSSDWRLPGCTVTPADPALPKLPSGGLEQAAGNIYYFRQMKWLLLLFHAKSCLTPVGSCKFHRCFQVQELVKHFENCKRKDCSYRDCRRSRMVTEHYKACVDLQCPVCSNAKKLLQRSAELASKQKPPEPRKIAQQNTAQRIMNGVEGDIMDIDLVSDEIFDSQPSVPKRLKMQPVSPSTAEREVSMPSNAGLILQETHSELPDQNNKVGQLKMDVKIDPRPLQKPAKIGYGTDGNVPTARHNVAPGGSNEIKTHVKQEIMPIDKETSETAPEVKNEANDSTDITVSKSGKPKIKGVSMTELFTPEQIQEHINSLRLWVGQSKAKAEKNQLMGHNENENSCQLCKVEKLTFEPPPIYCSPCGARIKRNAPYYTVGTGDTRHFFCIPCYNESRGDTIEVEGQNFLKARFEKKRNDEETEEWWVQCDKCECWQHQICALFNGRRNDGGQAEYTCPNCYVEEVKRGLRMPLPQSAVLGAKDLPRTVLSDHIEDRLFKRLKQERQDRAAQERKSIEEVPGAEGLVVRVVSSVDKKLEVKPRFLEIFQEDNYPTEFPYKSKAVLLFQKIEGVEVCLFGMYVQEFGAECSYPNQRRVYLSYLDSVKYFRPEIRTVSGEALRTFVYHEILIGYLEYCKQRGFTSCYIWACPPLKGEDYILYCHPEIQKTPKSDKLREWYLSMLRKATKEEIVVELTNLYDHFFITMGECKAKVTASRLPYFDGDYWPGAAEDMINQLRQEEDDRKQQKKGKTKKIITKRALKAAGHTDLSGNASKDAMLMHKLGETIYPMKEDFIMVHLQYSCSHCCTLMVSGKRWVCHQCRSFYICDKCYDAEQQLEDRERHPSNSRDTHTLHPVDIVGLPKDTKDRDDILESEFFDTRQAFLSLCQGNHYQYDTLRRAKHSSMMVLYHLHNPTAPAFVTTCNVCCHDIETGQGWRCEVCPDFDLRKMLDLLVHASTCRSGSCQYPNCRKVKGLFRHGMQCKTRASGGCVLCKKMWYMLQLHARACRDSGCNVPRCRDLKEHLRRLQQQSDSRRRAAVNEMMRQRAAEVAANE.

Disordered regions lie at residues 1-34 (MNVG…ADGL), 459-493 (QQQP…SEQG), and 528-551 (KGGQ…HDSQ). Positions 11–23 (GQMSGQAPQTNQV) are enriched in polar residues. A compositionally biased stretch (low complexity) spans 459–469 (QQQPNSQHQQS). 2 stretches are compositionally biased toward polar residues: residues 470–491 (ILRS…QLSE) and 536–551 (LSSS…HDSQ). The segment at 651–732 (AAGNIYYFRQ…DLQCPVCSNA (82 aa)) adopts a TAZ-type 1 zinc-finger fold. Positions 886 to 899 (KETSETAPEVKNEA) are enriched in basic and acidic residues. The disordered stretch occupies residues 886-912 (KETSETAPEVKNEANDSTDITVSKSGK). Positions 900–909 (NDSTDITVSK) are enriched in polar residues. A PHD-type zinc finger spans residues 1002–1079 (HFFCIPCYNE…EYTCPNCYVE (78 aa)). A CBP/p300-type HAT domain is found at 1094 to 1530 (VLGAKDLPRT…VLYHLHNPTA (437 aa)). Acetyl-CoA contacts are provided by residues 1217-1219 (LDS), 1236-1237 (RT), and Trp1292. Residues 1342–1365 (GAAEDMINQLRQEEDDRKQQKKGK) are a coiled coil. The ZZ-type zinc-finger motif lies at 1412 to 1475 (HLQYSCSHCC…TLHPVDIVGL (64 aa)). The Zn(2+) site is built by Cys1417, Cys1420, Cys1432, Cys1435, Cys1441, Cys1444, His1457, and His1465. The TAZ-type 2 zinc finger occupies 1553–1634 (EVCPDFDLRK…GCNVPRCRDL (82 aa)). Residues 1630-1650 (RCRDLKEHLRRLQQQSDSRRR) are a coiled coil.

The protein localises to the nucleus. The enzyme catalyses L-lysyl-[protein] + acetyl-CoA = N(6)-acetyl-L-lysyl-[protein] + CoA + H(+). In terms of biological role, acetyltransferase enzyme. Acetylates histones, giving a specific tag for transcriptional activation. This chain is Probable histone acetyltransferase HAC-like 1, found in Oryza sativa subsp. japonica (Rice).